Reading from the N-terminus, the 1026-residue chain is Multidrug resistance protein MdtC (1026 aa).

11 helical membrane passes run isoleucine 15–alanine 35, glutamate 333–leucine 353, leucine 360–cysteine 380, leucine 387–leucine 407, valine 431–leucine 451, phenylalanine 463–proline 483, leucine 528–proline 548, leucine 853–serine 873, leucine 897–valine 917, proline 953–glycine 973, and isoleucine 984–valine 1004.

This sequence belongs to the resistance-nodulation-cell division (RND) (TC 2.A.6) family. MdtC subfamily. In terms of assembly, part of a tripartite efflux system composed of MdtA, MdtB and MdtC. MdtC forms a heteromultimer with MdtB.

The protein resides in the cell inner membrane. This is Multidrug resistance protein MdtC from Salmonella paratyphi B (strain ATCC BAA-1250 / SPB7).